The following is a 7968-amino-acid chain: Obscurin (7968 aa).

Ig-like domains lie at 10–100 (PRFL…LQVD), 110–202 (PHFL…LVVD), 236–322 (PASP…QTYS), 331–414 (PAVP…RTVA), and 420–508 (GNLL…VSAP). Cysteines 31 and 82 form a disulfide. The interval 228–249 (EAMRAEGAPASPPSTGTRTCTV) is disordered. A compositionally biased stretch (polar residues) spans 240–249 (PSTGTRTCTV). 2 disulfide bridges follow: Cys-259–Cys-311 and Cys-354–Cys-404. Ser-395 is modified (phosphoserine). One can recognise a Fibronectin type-III 1 domain in the interval 515–612 (PPVDPVVKAR…FPGTVHLAPK (98 aa)). Ig-like domains are found at residues 619–698 (LKAV…MEVR), 701–790 (PGLT…YQLS), 798–884 (LHKD…LRVS), 886–977 (PKVV…DVKE), 978–1066 (PKVV…FRLH), 1070–1161 (PKMM…HITE), 1162–1252 (PKGV…LHIT), 1254–1345 (PKAV…DVSE), 1346–1432 (PKAV…LSFS), 1438–1524 (PKVV…LSFH), 1530–1621 (PKAV…HVAE), and 1622–1719 (PKVV…PQIS). Intrachain disulfides connect Cys-819-Cys-870, Cys-912-Cys-962, Cys-1004-Cys-1054, Cys-1096-Cys-1146, Cys-1188-Cys-1238, Cys-1280-Cys-1330, Cys-1372-Cys-1422, Cys-1464-Cys-1514, Cys-1556-Cys-1606, Cys-1648-Cys-1698, Cys-1723-Cys-1791, and Cys-1830-Cys-1880. One can recognise a Fibronectin type-III 2 domain in the interval 1731–1808 (KEHEDIILTA…DFPVQVEEVA (78 aa)). 29 Ig-like domains span residues 1809–1894 (AKFC…LTVS), 1896–1982 (PRVV…AALR), 1987–2071 (PVLF…AKLT), 2077–2162 (VRLV…LVVT), 2165–2249 (PVSF…ASVK), 2289–2380 (PVTL…QSIT), 2468–2559 (PVVL…REVT), 2564–2643 (LQDA…LEVR), 2646–2730 (PVVF…ARVR), 2736–2823 (VGIT…LIVR), 2826–2908 (PAAI…STAS), 2920–2999 (EELT…AQLL), 3003–3092 (RRVH…LRVT), 3095–3183 (PSVF…VHAR), 3184–3268 (PVRF…ATLT), 3273–3356 (PAQF…ASLT), 3359–3444 (PMPA…ATLT), 3449–3532 (PAKF…ATLT), 3537–3620 (PARF…AMLT), 3625–3708 (PIKF…AMLT), 3713–3796 (PSKF…ATLT), 3801–3884 (PARF…ATLT), 3890–3973 (PVFR…ATLT), 3978–4062 (PVRF…ASLS), 4068–4160 (PKFK…PEVT), 4171–4239 (TADE…NHAS), 4248–4337 (PEVT…LKVT), 4340–4427 (NTVV…FLTV), and 4430–4518 (WRLE…ARLT). Cystine bridges form between Cys-2187–Cys-2237, Cys-2311–Cys-2361, and Cys-2490–Cys-2540. A disulfide bridge links Cys-2668 with Cys-2718. 2 disulfides stabilise this stretch: Cys-2848–Cys-2898 and Cys-2937–Cys-2987. Phosphoserine is present on Ser-2889. 12 disulfides stabilise this stretch: Cys-3117-Cys-3167, Cys-3206-Cys-3256, Cys-3295-Cys-3344, Cys-3383-Cys-3432, Cys-3471-Cys-3520, Cys-3559-Cys-3608, Cys-3647-Cys-3696, Cys-3735-Cys-3784, Cys-3823-Cys-3872, Cys-3911-Cys-3961, Cys-4000-Cys-4050, and Cys-4089-Cys-4141. Ser-4015 carries the phosphoserine modification. Cys-4453 and Cys-4508 are joined by a disulfide. The 95-residue stretch at 4525–4619 (PPEDAEVVAR…LPQTVRLAEP (95 aa)) folds into the Fibronectin type-III 3 domain. Positions 4624–4714 (PPQPSAPESR…AAATFQVALS (91 aa)) constitute an Ig-like 47 domain. The disordered stretch occupies residues 4749–4785 (MSREPTLDSISELPEEDGRSQRLPQEAEEVAPDLSEG). Ser-4750 carries the phosphoserine modification. Thr-4754 carries the phosphothreonine modification. Phosphoserine is present on Ser-4757. Phosphothreonine is present on Thr-4788. A Phosphoserine modification is found at Ser-4805. The segment at 4820 to 4860 (LKKAGRPGTSPLASKVGAPAAPSVKPQQQQEPLAAVRPPLG) is disordered. An IQ domain is found at 4872-4901 (MDKAAVKIQAAFKGYKVRKEMKQQEGPMFS). Ig-like domains lie at 4898–4989 (PMFS…VVVS) and 5126–5215 (PVFL…AELR). 2 disulfides stabilise this stretch: Cys-4919/Cys-4971 and Cys-5147/Cys-5199. The segment covering 5238-5256 (AQGYLSSREQEGTESTTDE) has biased composition (polar residues). The disordered stretch occupies residues 5238–5257 (AQGYLSSREQEGTESTTDEG). 2 Ig-like domains span residues 5260-5349 (PQVV…ARLL) and 5371-5467 (PRML…LHVS). The disordered stretch occupies residues 5554-5596 (AKLQVPGGDSDEDSKTPSASPRHGRSRPSSSIQESSSESEDGD). At Ser-5563 the chain carries Phosphoserine. At Thr-5569 the chain carries Phosphothreonine. The span at 5570–5589 (PSASPRHGRSRPSSSIQESS) shows a compositional bias: low complexity. Residues Ser-5571 and Ser-5573 each carry the phosphoserine modification. The region spanning 5600 to 5667 (EIFDIYVVTA…SPAYLDRRLK (68 aa)) is the SH3 domain. A DH domain is found at 5693–5877 (RLSSVIQELL…SALPQRAENK (185 aa)). A PH domain is found at 5895–6004 (EPIRQGHFIV…WVKEICGIQQ (110 aa)). A 1,2-diacyl-sn-glycero-3-phospho-(1D-myo-inositol-4,5-bisphosphate) is bound at residue Arg-5975. Arg-5980 contributes to the a 1,2-diacyl-sn-glycero-3-phospho-(1D-myo-inositol-3,4-bisphosphate) binding site. 2 consecutive Ig-like domains span residues 6014-6097 (PDFE…GNCS) and 6108-6200 (PRFV…LRIQ). 2 cysteine pairs are disulfide-bonded: Cys-6035–Cys-6087 and Cys-6129–Cys-6182. Residues 6237–6296 (RLLGPKAPGPSTGDLTGPGPCPRGAPALQETGSQPPVTGTSEAPAVPPRVPQPLLHEGPE) are disordered. Positions 6266–6277 (ETGSQPPVTGTS) are enriched in polar residues. Residues 6357 to 6445 (PSMQVTIEDV…GQVLCKAELL (89 aa)) form the Ig-like 54 domain. The Protein kinase 1 domain maps to 6468–6721 (YEVKEEIGRG…AAQCLSHPWF (254 aa)). Residues 6474 to 6482 (IGRGVFGFV) and Lys-6497 each bind ATP. Catalysis depends on Asp-6587, which acts as the Proton acceptor. Disordered stretches follow at residues 6777–6863 (GVAR…AQGC), 6952–7176 (SGTH…TMRK), and 7217–7272 (VSQS…TPWE). Ser-6831 carries the phosphoserine modification. The span at 7052–7061 (AVAPCPPGSF) shows a compositional bias: pro residues. A compositionally biased stretch (low complexity) spans 7115 to 7139 (SSPGSASQASSSQVSSLRVGSSQVG). Polar residues predominate over residues 7160–7172 (DSTPTLQRPQEQA). Positions 7227–7242 (EARAESQSEEQQEARA) are enriched in basic and acidic residues. At Ser-7244 the chain carries Phosphoserine. The 90-residue stretch at 7463–7552 (PTFLRELSDE…GTVTTTGVLR (90 aa)) folds into the Ig-like 55 domain. Residues Cys-7484 and Cys-7536 are joined by a disulfide bond. One can recognise a Fibronectin type-III 4 domain in the interval 7557 to 7649 (PSSSPCPDIG…PSEQVLLGGP (93 aa)). The Protein kinase 2 domain occupies 7672–7924 (FAFQTQIQRG…ASSCLQCPWL (253 aa)). ATP-binding positions include 7678 to 7686 (IQRGRFSVV) and Lys-7701. The active-site Proton acceptor is the Asp-7791.

The protein belongs to the protein kinase superfamily. CAMK Ser/Thr protein kinase family. As to quaternary structure, interacts (via protein kinase domain 2) with CDH2 and (via protein kinase domain 1) with ATP1B1. Isoform 3 interacts with TTN/titin and calmodulin. Isoform 3 interacts with ANK1 isoform Mu17/ank1.5. Mg(2+) is required as a cofactor. In terms of processing, autophosphorylated by protein kinase domains 1 and 2.

It is found in the cytoplasm. Its subcellular location is the myofibril. The protein resides in the sarcomere. It localises to the m line. The protein localises to the z line. It is found in the cell membrane. Its subcellular location is the sarcolemma. The protein resides in the nucleus. The enzyme catalyses L-seryl-[protein] + ATP = O-phospho-L-seryl-[protein] + ADP + H(+). It carries out the reaction L-threonyl-[protein] + ATP = O-phospho-L-threonyl-[protein] + ADP + H(+). Its function is as follows. Structural component of striated muscles which plays a role in myofibrillogenesis. Probably involved in the assembly of myosin into sarcomeric A bands in striated muscle. Has serine/threonine protein kinase activity and phosphorylates N-cadherin CDH2 and sodium/potassium-transporting ATPase subunit ATP1B1. Binds (via the PH domain) strongly to phosphatidylinositol 3,4-bisphosphate (PtdIns(3,4)P2) and phosphatidylinositol 4,5-bisphosphate (PtdIns(4,5)P2), and to a lesser extent to phosphatidylinositol 3-phosphate (PtdIns(3)P), phosphatidylinositol 4-phosphate (PtdIns(4)P), phosphatidylinositol 5-phosphate (PtdIns(5)P) and phosphatidylinositol 3,4,5-trisphosphate (PtdIns(3,4,5)P3). In Homo sapiens (Human), this protein is Obscurin (OBSCN).